We begin with the raw amino-acid sequence, 195 residues long: CASP-like protein IN26 (195 aa).

The Cytoplasmic portion of the chain corresponds to 1–26 (VAPTGSVETEKAGPSYKPKEYYKVTE). The helical transmembrane segment at 27–47 (AILRLLLLASLVVAVVVMVTS) threads the bilayer. The Extracellular portion of the chain corresponds to 48 to 75 (KETELISVKLDPFPPFMLPLTAKFTQSP). A helical membrane pass occupies residues 76-96 (AFIYFVAGLSVAGLYTIISTL). Residues 97-120 (ASFYNLLIKPGFCPALVSHFIILD) are Cytoplasmic-facing. A helical membrane pass occupies residues 121–143 (VVMLGIVGTATGAAGGVAYIGLK). At 144–163 (GNSHVGWTKVCNKYGKLCTH) the chain is on the extracellular side. A helical membrane pass occupies residues 164–184 (LGASLAVSFFAFIVLLLLIIL). At 185 to 195 (SIHSLSKKIPK) the chain is on the cytoplasmic side.

It belongs to the Casparian strip membrane proteins (CASP) family. Homodimer and heterodimers.

The protein resides in the cell membrane. In Ipomoea nil (Japanese morning glory), this protein is CASP-like protein IN26 (IN26).